The sequence spans 182 residues: Peptidyl-tRNA hydrolase (182 aa).

Y14 contributes to the tRNA binding site. H19 (proton acceptor) is an active-site residue. The tRNA site is built by F60, N62, and N106.

It belongs to the PTH family. As to quaternary structure, monomer.

The protein resides in the cytoplasm. The enzyme catalyses an N-acyl-L-alpha-aminoacyl-tRNA + H2O = an N-acyl-L-amino acid + a tRNA + H(+). Hydrolyzes ribosome-free peptidyl-tRNAs (with 1 or more amino acids incorporated), which drop off the ribosome during protein synthesis, or as a result of ribosome stalling. Its function is as follows. Catalyzes the release of premature peptidyl moieties from peptidyl-tRNA molecules trapped in stalled 50S ribosomal subunits, and thus maintains levels of free tRNAs and 50S ribosomes. This chain is Peptidyl-tRNA hydrolase, found in Campylobacter concisus (strain 13826).